The primary structure comprises 411 residues: MPKKFGRIHLVVMDSVGIGAAPDADKFFNHDVETHEAINDVKSDTIGHISEIRGLDVPNLQKLGWGNIPRESPLKTIPAAQKPAAYVTKLEEISKGKDTMTGHWEIMGLNIQTPFPTYPEGYPEDLLEKIEEFSGRKIIREANKPYSGTAVIEDFGPRQLETGELIIYTSADPVLQIAAHEDVISREELYKICEYVRSITLEGSGIMIGRIIARPYVGEAGNFERTDGRRDYALSPFAETVLEKLYKAGIDTYSVGKISDIFNTVGVKYDMGHNHNDMDGVDRLLKAMTKTEFTEGFSFTNLVDFDAKYGHRRDVEGYGKAIEDFDGRLPEIIDAMNEDDLLMITADHGNDPSYVGTDHTREYIPLVIFSKSFKEPKVLPVGHFADISATIAENFSVKKAQTGESFLDALV.

D14, D306, H311, D347, H348, and H359 together coordinate Mn(2+).

This sequence belongs to the phosphopentomutase family. Mn(2+) serves as cofactor.

Its subcellular location is the cytoplasm. It carries out the reaction 2-deoxy-alpha-D-ribose 1-phosphate = 2-deoxy-D-ribose 5-phosphate. The enzyme catalyses alpha-D-ribose 1-phosphate = D-ribose 5-phosphate. Its pathway is carbohydrate degradation; 2-deoxy-D-ribose 1-phosphate degradation; D-glyceraldehyde 3-phosphate and acetaldehyde from 2-deoxy-alpha-D-ribose 1-phosphate: step 1/2. In terms of biological role, isomerase that catalyzes the conversion of deoxy-ribose 1-phosphate (dRib-1-P) and ribose 1-phosphate (Rib-1-P) to deoxy-ribose 5-phosphate (dRib-5-P) and ribose 5-phosphate (Rib-5-P), respectively. This chain is Phosphopentomutase, found in Lactococcus lactis subsp. cremoris (strain SK11).